The following is a 108-amino-acid chain: MRLLFAFFIICHIFTNNVQLTFAADLDAGEQIFSANCSACHANGNNAIMPDKTLKSDALSENKMNSIEAITNQVKNGKNAMPAFGGRLADEDIENVANYVLNKSENGW.

Positions 1–23 (MRLLFAFFIICHIFTNNVQLTFA) are cleaved as a signal peptide. Positions 37, 40, 41, and 81 each coordinate heme c.

The protein belongs to the cytochrome c family. PetJ subfamily. Monomer. Post-translationally, binds 1 heme c group covalently per subunit.

It localises to the plastid. The protein localises to the chloroplast thylakoid lumen. Functionally, functions as an electron carrier between membrane-bound cytochrome b6-f and photosystem I in oxygenic photosynthesis. This is Cytochrome c6 from Gracilaria tenuistipitata var. liui (Red alga).